Consider the following 632-residue polypeptide: Dihydrolipoyllysine-residue acetyltransferase component of pyruvate dehydrogenase complex, mitochondrial (632 aa).

Residues 1–77 constitute a mitochondrion transit peptide; that stretch reads MWRVCARRVQ…LLGSPSRRSY (77 aa). Lipoyl-binding domains follow at residues 82 to 158 and 208 to 284; these read HQKV…CITV and HMQI…CIIV. S91 is subject to Phosphoserine. K123 and K249 each carry N6-lipoyllysine. One can recognise a Peripheral subunit-binding (PSBD) domain in the interval 342 to 379; the sequence is FVSPLAKKLAAEKGIDLTQVKGTGPEGRIIKKDIDSFV. Position 446 (R446) interacts with CoA. Residue K451 is modified to N6-acetyllysine. K458 carries the N6-succinyllysine modification. S460 contacts CoA. Position 532 is an N6-succinyllysine (K532). CoA-binding residues include S551, N552, and G576. Catalysis depends on residues H605 and D609.

Belongs to the 2-oxoacid dehydrogenase family. As to quaternary structure, part of the pyruvate dehydrogenase complex (PDHc) that is a multi-enzyme complex composed of multiple copies of three enzymes, pyruvate dehydrogenase (subunits PDH1A and PDHB, E1 component), dihydrolipoamide acetyltransferase (DLAT, E2 component), and dihydrolipoamide dehydrogenase (DLD, E3 component) to which is added an additional protein the E3-binding protein (PDHX, E3BP). In terms of structural architecture, the E2 and E3BP components assemble into a 60meric central core with icosahedral symmetry. The central core is decorated with E1 and E3 proteins. Currently, two alternative models for the E2:E3BP stoichiometry are considered as being either 48:12 (E2(48)-E3BP(12)) or 40:20 (E2(40)-E3BP(20)). Interacts with PDK2 and PDK3. Interacts with SIRT4. Interacts with PDHB. The cofactor is (R)-lipoate. In terms of processing, delipoylated at Lys-123 and Lys-249 by SIRT4, delipoylation decreases the PHD complex activity. In terms of tissue distribution, expressed in flagella of epididymal sperm.

The protein localises to the mitochondrion matrix. It carries out the reaction N(6)-[(R)-dihydrolipoyl]-L-lysyl-[protein] + acetyl-CoA = N(6)-[(R)-S(8)-acetyldihydrolipoyl]-L-lysyl-[protein] + CoA. Functionally, as part of the pyruvate dehydrogenase complex, catalyzes the transfers of an acetyl group to a lipoic acid moiety. The pyruvate dehydrogenase complex, catalyzes the overall conversion of pyruvate to acetyl-CoA and CO(2), and thereby links cytoplasmic glycolysis and the mitochondrial tricarboxylic acid (TCA) cycle. This Rattus norvegicus (Rat) protein is Dihydrolipoyllysine-residue acetyltransferase component of pyruvate dehydrogenase complex, mitochondrial.